The sequence spans 239 residues: Ribosomal RNA small subunit methyltransferase G (239 aa).

Residues Gly-77, Phe-82, 128–129 (AE), and Arg-146 each bind S-adenosyl-L-methionine. Positions 215–239 (DKRSQTPKKYPRKPGTPNKSPLLEK) are disordered.

Belongs to the methyltransferase superfamily. RNA methyltransferase RsmG family.

It is found in the cytoplasm. Functionally, specifically methylates the N7 position of guanine in position 535 of 16S rRNA. This is Ribosomal RNA small subunit methyltransferase G from Staphylococcus saprophyticus subsp. saprophyticus (strain ATCC 15305 / DSM 20229 / NCIMB 8711 / NCTC 7292 / S-41).